The following is a 167-amino-acid chain: MTAGTVVITGGILATVILLCIIAVLCYCRLQYYCCKKDESEEDEEEPDFAVHSHLPPLHSNRNLVLTNGPALYPAATTSFSQKSPQARALCRSCSHYEPPTFFLQEPEDEDFEGVRNGGGRVAYKSISQEDVELPSASFGGLQALNPNRLSAMREAFSRSRSVSTDV.

The chain crosses the membrane as a helical span at residues 6-26 (VVITGGILATVILLCIIAVLC). Phosphoserine is present on Ser40.

The protein belongs to the FAM163 family.

The protein localises to the membrane. This is Protein FAM163B (Fam163b) from Mus musculus (Mouse).